Reading from the N-terminus, the 463-residue chain is Ribosomal protein uS12 methylthiotransferase RimO (463 aa).

Residues 15–130 enclose the MTTase N-terminal domain; it reads PKVGMVSLGC…VMQVVHSHLP (116 aa). C24, C60, C89, C161, C165, and C168 together coordinate [4Fe-4S] cluster. Residues 147–392 form the Radical SAM core domain; the sequence is LTPRHYAYLK…MEVAEEVSAA (246 aa). In terms of domain architecture, TRAM spans 395–463; it reads ERKVGKTLKV…ADGHDLWGEV (69 aa).

It belongs to the methylthiotransferase family. RimO subfamily. Requires [4Fe-4S] cluster as cofactor.

It localises to the cytoplasm. It catalyses the reaction L-aspartate(89)-[ribosomal protein uS12]-hydrogen + (sulfur carrier)-SH + AH2 + 2 S-adenosyl-L-methionine = 3-methylsulfanyl-L-aspartate(89)-[ribosomal protein uS12]-hydrogen + (sulfur carrier)-H + 5'-deoxyadenosine + L-methionine + A + S-adenosyl-L-homocysteine + 2 H(+). Its function is as follows. Catalyzes the methylthiolation of an aspartic acid residue of ribosomal protein uS12. This chain is Ribosomal protein uS12 methylthiotransferase RimO, found in Burkholderia thailandensis (strain ATCC 700388 / DSM 13276 / CCUG 48851 / CIP 106301 / E264).